Reading from the N-terminus, the 218-residue chain is Capsid protein (218 aa).

An N-acetylmethionine; by host modification is found at methionine 1. A compositionally biased stretch (low complexity) spans 1–10 (MDKSESTSAG). The segment at 1 to 29 (MDKSESTSAGRNRRRRPRRGSRSASSSAD) is disordered. The segment covering 11-21 (RNRRRRPRRGS) has biased composition (basic residues).

This sequence belongs to the cucumovirus capsid protein family.

The protein localises to the virion. In terms of biological role, capsid protein. Probably binds RNA and plays a role in packaging. The chain is Capsid protein from Cucumis sativus (Cucumber).